A 227-amino-acid polypeptide reads, in one-letter code: Cytochrome c oxidase subunit 2 (227 aa).

The Mitochondrial intermembrane portion of the chain corresponds to 1-14; the sequence is MAYPFQLGFQDAAS. A helical transmembrane segment spans residues 15-45; the sequence is PIMEELLHFHDHTLMIVFLISSLVLYIITLM. The Mitochondrial matrix portion of the chain corresponds to 46–59; the sequence is LTTKLTHTSTMDAQ. The chain crosses the membrane as a helical span at residues 60 to 87; it reads EVETVWTILPAIILILIALPSLRILYMM. The Mitochondrial intermembrane portion of the chain corresponds to 88 to 227; it reads DEVNNPSLTV…VFEKWSVSML (140 aa). Positions 161, 196, 198, 200, 204, and 207 each coordinate Cu cation. E198 lines the Mg(2+) pocket.

The protein belongs to the cytochrome c oxidase subunit 2 family. In terms of assembly, component of the cytochrome c oxidase (complex IV, CIV), a multisubunit enzyme composed of 14 subunits. The complex is composed of a catalytic core of 3 subunits MT-CO1, MT-CO2 and MT-CO3, encoded in the mitochondrial DNA, and 11 supernumerary subunits COX4I, COX5A, COX5B, COX6A, COX6B, COX6C, COX7A, COX7B, COX7C, COX8 and NDUFA4, which are encoded in the nuclear genome. The complex exists as a monomer or a dimer and forms supercomplexes (SCs) in the inner mitochondrial membrane with NADH-ubiquinone oxidoreductase (complex I, CI) and ubiquinol-cytochrome c oxidoreductase (cytochrome b-c1 complex, complex III, CIII), resulting in different assemblies (supercomplex SCI(1)III(2)IV(1) and megacomplex MCI(2)III(2)IV(2)). Found in a complex with TMEM177, COA6, COX18, COX20, SCO1 and SCO2. Interacts with TMEM177 in a COX20-dependent manner. Interacts with COX20. Interacts with COX16. Cu cation serves as cofactor.

The protein localises to the mitochondrion inner membrane. It catalyses the reaction 4 Fe(II)-[cytochrome c] + O2 + 8 H(+)(in) = 4 Fe(III)-[cytochrome c] + 2 H2O + 4 H(+)(out). Functionally, component of the cytochrome c oxidase, the last enzyme in the mitochondrial electron transport chain which drives oxidative phosphorylation. The respiratory chain contains 3 multisubunit complexes succinate dehydrogenase (complex II, CII), ubiquinol-cytochrome c oxidoreductase (cytochrome b-c1 complex, complex III, CIII) and cytochrome c oxidase (complex IV, CIV), that cooperate to transfer electrons derived from NADH and succinate to molecular oxygen, creating an electrochemical gradient over the inner membrane that drives transmembrane transport and the ATP synthase. Cytochrome c oxidase is the component of the respiratory chain that catalyzes the reduction of oxygen to water. Electrons originating from reduced cytochrome c in the intermembrane space (IMS) are transferred via the dinuclear copper A center (CU(A)) of subunit 2 and heme A of subunit 1 to the active site in subunit 1, a binuclear center (BNC) formed by heme A3 and copper B (CU(B)). The BNC reduces molecular oxygen to 2 water molecules using 4 electrons from cytochrome c in the IMS and 4 protons from the mitochondrial matrix. The protein is Cytochrome c oxidase subunit 2 (MT-CO2) of Balaenoptera physalus (Fin whale).